A 1203-amino-acid chain; its full sequence is Plasma membrane calcium-transporting ATPase 4 (1203 aa).

Residues 1–92 (MTNPSGHNLP…NMIPPKKPKT (92 aa)) are Cytoplasmic-facing. The residue at position 13 (Ser-13) is a Phosphoserine. The helical transmembrane segment at 93–113 (FLELVWEALQDVTLIILEIAA) threads the bilayer. The Extracellular segment spans residues 114–150 (IISLVLSFYRPPGGENEICGHIVSNPEEDEEGETGWI). Residues 151–171 (EGAAILASVIIVVFVTAFNDW) form a helical membrane-spanning segment. Topologically, residues 172 to 356 (SKEKQFRGLQ…KEKSVLQGKL (185 aa)) are cytoplasmic. Residues 294 to 319 (DDEKKKKGKKQGVSENRNKAKTQDGV) are disordered. Ser-328 and Ser-334 each carry phosphoserine. Residues 330 to 349 (EGLDSEEKEKKASKGPKKEK) are disordered. The segment covering 334–349 (SEEKEKKASKGPKKEK) has biased composition (basic and acidic residues). A helical transmembrane segment spans residues 357 to 376 (TRLAVQIGKAGLIMSILTVL). The Extracellular segment spans residues 377-409 (ILILYFVVDNFVIQRRAWLPECTPVYIQYFVKF). Residues 410-427 (FIIGVTVLVVAVPEGLPL) traverse the membrane as a helical segment. Residues 428–840 (AVTISLAYSV…MWGRNVYDSI (413 aa)) lie on the Cytoplasmic side of the membrane. Residue Asp-465 is the 4-aspartylphosphate intermediate of the active site. Residues Asp-785 and Asp-789 each contribute to the Mg(2+) site. A helical transmembrane segment spans residues 841–860 (SKFLQFQLTVNVVAVIVAFS). Topologically, residues 861 to 870 (GACITQDSPL) are extracellular. Residues 871-891 (KAVQMLWVNLIMDTFASLALA) form a helical membrane-spanning segment. At 892-911 (TEPPTDSLLRRRPYGRNKPL) the chain is on the cytoplasmic side. The chain crosses the membrane as a helical span at residues 912–934 (ISRTMMKNILGHAVYQLGIVFLL). The Extracellular portion of the chain corresponds to 935-952 (VFAGDKLFDIDSGRKAPL). The helical transmembrane segment at 953-974 (NSPPSQHYTIVFNTFVLMQLFN) threads the bilayer. Residues 975–993 (EINSRKIHGEKNVFAGVYR) lie on the Cytoplasmic side of the membrane. The chain crosses the membrane as a helical span at residues 994–1015 (NIIFCSVVLGTFFCQILIVEVG). Residues 1016 to 1025 (GKPFSCTNLT) lie on the Extracellular side of the membrane. A helical transmembrane segment spans residues 1026-1047 (MEQWMWCLFIGIGELLWGQVIS). Residues 1048–1203 (AIPTKSLKFL…SPLQSQETPV (156 aa)) are Cytoplasmic-facing. Ser-1064 and Ser-1070 each carry phosphoserine. Positions 1086-1103 (LRRGQILWVRGLNRIQTQ) are calmodulin-binding subdomain A. Position 1102 is a phosphothreonine; by PKC (Thr-1102). Position 1103 is a phosphoserine (Gln-1103). A calmodulin-binding subdomain B region spans residues 1104 to 1113 (IRVVKVFHSF). Phosphoserine occurs at positions 1114, 1115, 1126, and 1144.

The protein belongs to the cation transport ATPase (P-type) (TC 3.A.3) family. Type IIB subfamily. In terms of assembly, interacts with PDZD11. Interacts with SLC35G1 and STIM1. Interacts with calmodulin. In terms of tissue distribution, ubiquitously expressed. Not detected in liver. The highest levels are found in uterus and stomach. Isoform XA is found in uterus, brain, stomach, small intestine, colon and pancreas. Isoform XB is found in uterus, skeletal muscle, lung, kidney, spleen, stomach, small intestine and pancreas. Isoform ZA is found in testis and isoform ZB is found in testis and heart.

Its subcellular location is the cell membrane. The protein resides in the cell projection. It localises to the cilium. The protein localises to the flagellum membrane. It carries out the reaction Ca(2+)(in) + ATP + H2O = Ca(2+)(out) + ADP + phosphate + H(+). With respect to regulation, activated by calcium/calmodulin. Calcium/calmodulin-regulated and magnesium-dependent enzyme that catalyzes the hydrolysis of ATP coupled with the transport of calcium out of the cell. By regulating sperm cell calcium homeostasis, may play a role in sperm motility. The polypeptide is Plasma membrane calcium-transporting ATPase 4 (Rattus norvegicus (Rat)).